Consider the following 378-residue polypeptide: tRNA-specific 2-thiouridylase MnmA (378 aa).

ATP contacts are provided by residues 6–13 and leucine 32; that span reads AMSGGVDS. Residue cysteine 101 is the Nucleophile of the active site. The cysteines at positions 101 and 199 are disulfide-linked. Glycine 125 serves as a coordination point for ATP. Positions 148–150 are interaction with tRNA; the sequence is KDQ. Cysteine 199 acts as the Cysteine persulfide intermediate in catalysis.

Belongs to the MnmA/TRMU family.

The protein resides in the cytoplasm. The enzyme catalyses S-sulfanyl-L-cysteinyl-[protein] + uridine(34) in tRNA + AH2 + ATP = 2-thiouridine(34) in tRNA + L-cysteinyl-[protein] + A + AMP + diphosphate + H(+). Its function is as follows. Catalyzes the 2-thiolation of uridine at the wobble position (U34) of tRNA, leading to the formation of s(2)U34. In Renibacterium salmoninarum (strain ATCC 33209 / DSM 20767 / JCM 11484 / NBRC 15589 / NCIMB 2235), this protein is tRNA-specific 2-thiouridylase MnmA.